Reading from the N-terminus, the 220-residue chain is dITP/XTP pyrophosphatase (220 aa).

13–18 serves as a coordination point for substrate; that stretch reads SHNAGK. Positions 45 and 74 each coordinate Mg(2+). The Proton acceptor role is filled by D74. Substrate is bound by residues S75, 163-166, K186, and 199-200; these read FGYD and HR.

This sequence belongs to the HAM1 NTPase family. In terms of assembly, homodimer. Mg(2+) is required as a cofactor.

It catalyses the reaction XTP + H2O = XMP + diphosphate + H(+). The enzyme catalyses dITP + H2O = dIMP + diphosphate + H(+). It carries out the reaction ITP + H2O = IMP + diphosphate + H(+). Functionally, pyrophosphatase that catalyzes the hydrolysis of nucleoside triphosphates to their monophosphate derivatives, with a high preference for the non-canonical purine nucleotides XTP (xanthosine triphosphate), dITP (deoxyinosine triphosphate) and ITP. Seems to function as a house-cleaning enzyme that removes non-canonical purine nucleotides from the nucleotide pool, thus preventing their incorporation into DNA/RNA and avoiding chromosomal lesions. This is dITP/XTP pyrophosphatase from Mesorhizobium japonicum (strain LMG 29417 / CECT 9101 / MAFF 303099) (Mesorhizobium loti (strain MAFF 303099)).